Reading from the N-terminus, the 300-residue chain is Acetylglutamate kinase (300 aa).

Residues G73–G74, R95, and N197 contribute to the substrate site.

Belongs to the acetylglutamate kinase family. ArgB subfamily.

The protein localises to the cytoplasm. The catalysed reaction is N-acetyl-L-glutamate + ATP = N-acetyl-L-glutamyl 5-phosphate + ADP. It functions in the pathway amino-acid biosynthesis; L-arginine biosynthesis; N(2)-acetyl-L-ornithine from L-glutamate: step 2/4. Functionally, catalyzes the ATP-dependent phosphorylation of N-acetyl-L-glutamate. In Bordetella pertussis (strain Tohama I / ATCC BAA-589 / NCTC 13251), this protein is Acetylglutamate kinase.